The sequence spans 447 residues: Nisin biosynthesis sensor protein NisK (447 aa).

Helical transmembrane passes span 15–35 and 147–167; these read VIEI…LTFF and TYLF…YHLI. The Histidine kinase domain occupies 235 to 447; the sequence is ALSHDVKTPL…GAEVILKIKK (213 aa). Residue H238 is modified to Phosphohistidine; by autocatalysis.

It localises to the cell membrane. The enzyme catalyses ATP + protein L-histidine = ADP + protein N-phospho-L-histidine.. Member of the two-component regulatory system NisK/NisR involved in the regulation of the biosynthesis of lantibiotic nisin. NisK may function as a membrane-associated protein kinase that phosphorylates NisR in response to environmental signals. This chain is Nisin biosynthesis sensor protein NisK (nisK), found in Lactococcus lactis subsp. lactis (Streptococcus lactis).